A 207-amino-acid polypeptide reads, in one-letter code: Guanylate kinase (207 aa).

Positions 5-184 (GNLFIVSAPS…ALADLRAIIR (180 aa)) constitute a Guanylate kinase-like domain. ATP is bound at residue 12–19 (APSGAGKS).

Belongs to the guanylate kinase family.

Its subcellular location is the cytoplasm. The catalysed reaction is GMP + ATP = GDP + ADP. In terms of biological role, essential for recycling GMP and indirectly, cGMP. In Shewanella sp. (strain MR-7), this protein is Guanylate kinase.